A 654-amino-acid polypeptide reads, in one-letter code: Macrolide export ATP-binding/permease protein MacB (654 aa).

The ABC transporter domain occupies Ile-6–Ala-244. Gly-42–Ser-49 serves as a coordination point for ATP. The next 4 helical transmembrane spans lie at Leu-279–Gly-299, Ile-534–Val-554, Met-584–Phe-604, and Val-617–Leu-637.

Belongs to the ABC transporter superfamily. Macrolide exporter (TC 3.A.1.122) family. Homodimer. Part of the tripartite efflux system MacAB-TolC, which is composed of an inner membrane transporter, MacB, a periplasmic membrane fusion protein, MacA, and an outer membrane component, TolC. The complex forms a large protein conduit and can translocate molecules across both the inner and outer membranes. Interacts with MacA.

Its subcellular location is the cell inner membrane. Part of the tripartite efflux system MacAB-TolC. MacB is a non-canonical ABC transporter that contains transmembrane domains (TMD), which form a pore in the inner membrane, and an ATP-binding domain (NBD), which is responsible for energy generation. Confers resistance against macrolides. This Hahella chejuensis (strain KCTC 2396) protein is Macrolide export ATP-binding/permease protein MacB.